The chain runs to 282 residues: D-alanine aminotransferase (282 aa).

Tyr-32 serves as a coordination point for substrate. A pyridoxal 5'-phosphate-binding site is contributed by Arg-51. The substrate site is built by Arg-99 and His-101. Lys-146 serves as the catalytic Proton acceptor. An N6-(pyridoxal phosphate)lysine modification is found at Lys-146. Pyridoxal 5'-phosphate is bound at residue Glu-178.

This sequence belongs to the class-IV pyridoxal-phosphate-dependent aminotransferase family. In terms of assembly, homodimer. It depends on pyridoxal 5'-phosphate as a cofactor.

The catalysed reaction is D-alanine + 2-oxoglutarate = D-glutamate + pyruvate. In terms of biological role, acts on the D-isomers of alanine, leucine, aspartate, glutamate, aminobutyrate, norvaline and asparagine. The enzyme transfers an amino group from a substrate D-amino acid to the pyridoxal phosphate cofactor to form pyridoxamine and an alpha-keto acid in the first half-reaction. The second half-reaction is the reverse of the first, transferring the amino group from the pyridoxamine to a second alpha-keto acid to form the product D-amino acid via a ping-pong mechanism. This is an important process in the formation of D-alanine and D-glutamate, which are essential bacterial cell wall components. In Staphylococcus aureus (strain MW2), this protein is D-alanine aminotransferase (dat).